We begin with the raw amino-acid sequence, 414 residues long: Glutamyl-tRNA reductase (414 aa).

Residues 49-52, serine 108, 113-115, and glutamine 119 each bind substrate; these read TCNR and EPQ. Residue cysteine 50 is the Nucleophile of the active site. 188–193 is an NADP(+) binding site; sequence GAGQTG.

The protein belongs to the glutamyl-tRNA reductase family. Homodimer.

It catalyses the reaction (S)-4-amino-5-oxopentanoate + tRNA(Glu) + NADP(+) = L-glutamyl-tRNA(Glu) + NADPH + H(+). It functions in the pathway porphyrin-containing compound metabolism; protoporphyrin-IX biosynthesis; 5-aminolevulinate from L-glutamyl-tRNA(Glu): step 1/2. Its function is as follows. Catalyzes the NADPH-dependent reduction of glutamyl-tRNA(Glu) to glutamate 1-semialdehyde (GSA). The sequence is that of Glutamyl-tRNA reductase from Francisella tularensis subsp. tularensis (strain WY96-3418).